The following is a 706-amino-acid chain: MAKEKYVIQAELETKGVLSNAREAQREINNIGRLAKETNKNAQITGSVTMKDKGIKETQRALNLAKQNVDNLTKALANAKMSGATQKQVQALESQLVKAQTQATRLSTELAKVGSEKGTGLSGAVDKMKSAGGSLLGTFSKVGNVVSGISSAIGLVSGGISKAVDLTSGFANTLMDTYDKQIQAQKTLSTTLSDGAKGYEQFNGHIDKGNSLLKSQKTDLNELGATISSYMKVSGDEAFKTVNAINAVGDSLGLGMDTQKQFTYGLAQALGSGTLHAQDFNQMMQSALGAQFRDMLIQAANEMQNVGMTAEQLPDALKKGKVEADLLANTFGDNWASKMAKAQTSLKGIEVSTGGVKRMLKDGQLSVQDFTNVFGDGFTSSLLNAMNTTSDGAVTMENFKDKMEDGVFSTEVMNRAIELFQQKGEKLASSGPSTWAQIREMISNGFNTSALDGFRKGLGDTGLDMSSMGNNATEMSSIVGSKLGQMAGQAVGALTKIIDKNKDGKVSNEEMEGAVNDAKDAVTNFFNKINFTSIQGFLGKIGNAIDELVRFYNWANDAYGAVQNLLSASRQVGGNTGLIGKALGFRKNSTWGDAFSDFHWLTSNIDPLGLKENQGLGQKLLGSRNGQIPLDLQFFAGGREAINKAVDAVQPYARASKGTTATSSIGTQDNSKQDIKIYVQSSADGQRIAKEIYNKLERNGVKLNKR.

Residues Q9–V113 adopt a coiled-coil conformation. EF-hand domains follow at residues G271 to A290, K361 to S380, and K496 to A521. Residues D499, N501, D503, K505, and E510 each coordinate Ca(2+).

This sequence belongs to the Mulikevirus tape measure protein family.

Its function is as follows. Serves as a base for tail tube protein polymerization and acts as a template for tail length determination. The sequence is that of Probable tape measure protein from Lactococcus phage c2.